The sequence spans 328 residues: MIAGATAPSSQHEILIASNLIKKPSTSQNKTPTAQSSSGNNGAADGAPQGYHHHHHHHRHLWWPRTTDHQYWCVLRKNQFAYYKTRDEREAISVIPRFDILNFKISELDGILTVYTPSKDLIFKFPRGQNEKVGMELMHNWKIALEKFLSSPSGNESVTTGSDYDEEEDDDDLIVVDEKAGPSSSKHSCSLTMDEQLSREDKEFYRMFDPRNAEHQVCSGILYTKVKKKKLFNRAKWQKFNVELTNTSFNLYSFKTGKLKKSIKLDKIIDCIELDNNSKMKNDDTNFALITFDERLSFKAANDQDMVDWIINFKSGILIRKKLKAENI.

The tract at residues 19-52 is disordered; the sequence is NLIKKPSTSQNKTPTAQSSSGNNGAADGAPQGYH. Over residues 24-41 the composition is skewed to polar residues; that stretch reads PSTSQNKTPTAQSSSGNN. A required for targeting to the cell membrane region spans residues 213 to 328; the sequence is AEHQVCSGIL…IRKKLKAENI (116 aa). Residues 215 to 318 enclose the PH domain; the sequence is HQVCSGILYT…WIINFKSGIL (104 aa).

Interacts with MSS4 (via N-terminus); to negatively regulate MSS4 kinase activity.

Its subcellular location is the cell membrane. The protein resides in the cytoplasm. Functionally, binds phosphatidylinositol 4,5-bisphosphate (PtdIns(4,5)P2/PIP2) at the cell membrane. Negatively regulates the activity of phosphatidylinositol 4-phosphate 5-kinase MSS4. The chain is Pleckstrin homology domain protein OPY1 (OPY1) from Saccharomyces cerevisiae (strain ATCC 204508 / S288c) (Baker's yeast).